The primary structure comprises 160 residues: Peptidyl-prolyl cis-trans isomerase CYP18-1 (160 aa).

In terms of domain architecture, PPIase cyclophilin-type spans 3-153 (VTLHTNLGDI…AEIRLNRVTI (151 aa)).

The protein belongs to the cyclophilin-type PPIase family. Ubiquitous.

The protein resides in the cytoplasm. The catalysed reaction is [protein]-peptidylproline (omega=180) = [protein]-peptidylproline (omega=0). PPIases accelerate the folding of proteins. It catalyzes the cis-trans isomerization of proline imidic peptide bonds in oligopeptides. The protein is Peptidyl-prolyl cis-trans isomerase CYP18-1 (CYP18-1) of Arabidopsis thaliana (Mouse-ear cress).